Reading from the N-terminus, the 81-residue chain is Large ribosomal subunit protein bL31B (81 aa).

Belongs to the bacterial ribosomal protein bL31 family. Type B subfamily. Part of the 50S ribosomal subunit.

This Bacillus cereus (strain ATCC 10987 / NRS 248) protein is Large ribosomal subunit protein bL31B.